Consider the following 125-residue polypeptide: Large ribosomal subunit protein bL12 (125 aa).

It belongs to the bacterial ribosomal protein bL12 family. As to quaternary structure, homodimer. Part of the ribosomal stalk of the 50S ribosomal subunit. Forms a multimeric L10(L12)X complex, where L10 forms an elongated spine to which 2 to 4 L12 dimers bind in a sequential fashion. Binds GTP-bound translation factors.

Functionally, forms part of the ribosomal stalk which helps the ribosome interact with GTP-bound translation factors. Is thus essential for accurate translation. The polypeptide is Large ribosomal subunit protein bL12 (Afipia carboxidovorans (strain ATCC 49405 / DSM 1227 / KCTC 32145 / OM5) (Oligotropha carboxidovorans)).